The chain runs to 521 residues: Glucosidase 2 subunit beta (521 aa).

The signal sequence occupies residues 1-14; that stretch reads MLLLLLLLLPLCWA. At S24 the chain carries Phosphoserine. LDL-receptor class A domains are found at residues 37–71 and 69–113; these read FTCL…AACP and ACPN…TVCE. Intrachain disulfides connect C39-C58 and C56-C70. D49 lines the substrate pocket. Residues Q50, D53, Y55, D57, D63, and E64 each contribute to the Ca(2+) site. A substrate-binding site is contributed by D53. N-linked (GlcNAc...) asparagine glycosylation occurs at N72. Cystine bridges form between C77-C99, C97-C112, and C100-C116. At S89 the chain carries Phosphoserine; by PKC. Ca(2+) is bound by residues R91, D94, V96, D98, D104, and E105. K166 bears the N6-succinyllysine mark. S168 bears the Phosphoserine mark. 2 consecutive EF-hand domains span residues 209–244 and 245–290; these read REQE…DTDG and DGAL…TDIP. Residues D222, N224, D226, M228, and E233 each contribute to the Ca(2+) site. 2 disordered regions span residues 226–267 and 280–350; these read DGMV…DTTS and YRSE…EKMP. Composition is skewed to acidic residues over residues 241–253 and 308–331; these read DTDG…EEEA and TEEE…EEEA. Over residues 332 to 343 the composition is skewed to pro residues; it reads PPPLQPPQPPSP. Residues S376 and S383 each carry the phosphoserine; by PKC modification. Residues 406–507 enclose the MRH domain; sequence SQCYELTTNE…ELMTPAACPE (102 aa). A disulfide bridge connects residues C408 and C421. S427 carries the phosphoserine; by PKC modification. 2 disulfide bridges follow: C464-C493 and C478-C505. The N-linked (GlcNAc...) asparagine glycan is linked to N469. The short motif at 518-521 is the Prevents secretion from ER element; that stretch reads HDEL.

In terms of assembly, heterodimer of a catalytic alpha subunit (GANAB) and a beta subunit (PRKCSH). Binds glycosylated PTPRC. Expressed in kidney (at protein level).

The protein resides in the endoplasmic reticulum. It participates in glycan metabolism; N-glycan metabolism. Functionally, regulatory subunit of glucosidase II that cleaves sequentially the 2 innermost alpha-1,3-linked glucose residues from the Glc(2)Man(9)GlcNAc(2) oligosaccharide precursor of immature glycoproteins. Required for efficient PKD1/Polycystin-1 biogenesis and trafficking to the plasma membrane of the primary cilia. This Mus musculus (Mouse) protein is Glucosidase 2 subunit beta.